The sequence spans 460 residues: uncharacterized protein (460 aa).

The TRAM domain occupies 5-63; the sequence is TWHQGELIEVAIADLSDTGDGVGRFAERVVFVPDTVPGDRVLVRLLHVKPNYAHGKLHQ. Cysteine 76, cysteine 82, cysteine 85, and cysteine 164 together coordinate [4Fe-4S] cluster. 4 residues coordinate S-adenosyl-L-methionine: glutamine 288, tyrosine 317, glutamate 338, and aspartate 383. The active-site Nucleophile is the cysteine 410.

Belongs to the class I-like SAM-binding methyltransferase superfamily. RNA M5U methyltransferase family.

This is an uncharacterized protein from Nostoc sp. (strain PCC 7120 / SAG 25.82 / UTEX 2576).